A 287-amino-acid polypeptide reads, in one-letter code: ATP synthase gamma chain (287 aa).

Belongs to the ATPase gamma chain family. As to quaternary structure, F-type ATPases have 2 components, CF(1) - the catalytic core - and CF(0) - the membrane proton channel. CF(1) has five subunits: alpha(3), beta(3), gamma(1), delta(1), epsilon(1). CF(0) has three main subunits: a, b and c.

The protein localises to the cell inner membrane. Its function is as follows. Produces ATP from ADP in the presence of a proton gradient across the membrane. The gamma chain is believed to be important in regulating ATPase activity and the flow of protons through the CF(0) complex. This chain is ATP synthase gamma chain, found in Xylella fastidiosa (strain M12).